Here is a 479-residue protein sequence, read N- to C-terminus: 5-hydroxytryptamine receptor 2B (479 aa).

The Extracellular segment spans residues 1-55 (MASSYKMSEQSTTSEHILQKTCDHLILTNRSGLETDSVAEEMKQTVEGQGHTVHW). An N-linked (GlcNAc...) asparagine glycan is attached at asparagine 29. A helical membrane pass occupies residues 56–78 (AALLILAVIIPTIGGNILVILAV). The Cytoplasmic portion of the chain corresponds to 79-89 (ALEKRLQYATN). The chain crosses the membrane as a helical span at residues 90–112 (YFLMSLAIADLLVGLFVMPIALL). Topologically, residues 113–128 (TIMFEAIWPLPLALCP) are extracellular. A disulfide bridge connects residues cysteine 127 and cysteine 206. Residues 129-150 (AWLFLDVLFSTASIMHLCAISL) form a helical membrane-spanning segment. Residues aspartate 134 and threonine 139 each coordinate ergotamine. The DRY motif; important for ligand-induced conformation changes motif lies at 151–153 (DRY). The Cytoplasmic portion of the chain corresponds to 151–170 (DRYIAIKKPIQANQCNSRAT). The helical transmembrane segment at 171 to 191 (AFIKITVVWLISIGIAIPVPI) threads the bilayer. The Extracellular portion of the chain corresponds to 192–215 (KGIETDVINPHNVTCELTKDRFGS). Leucine 208 contributes to the ergotamine binding site. A [DE]RFG motif; may stabilize a conformation that preferentially activates signaling via beta-arrestin family members motif is present at residues 211-214 (DRFG). A helical membrane pass occupies residues 216 to 238 (FMVFGSLAAFFAPLTIMVVTYFL). At 239 to 323 (TIHTLQKKAY…TISNEQRASK (85 aa)) the chain is on the cytoplasmic side. Residues 324-344 (ALGVVFFLFLLMWCPFFITNL) form a helical membrane-spanning segment. Residues 345–359 (TLALCDSCNQTTLKT) lie on the Extracellular side of the membrane. Residues cysteine 349 and cysteine 352 are joined by a disulfide bond. The helical transmembrane segment at 360–381 (LLEIFVWIGYVSSGVNPLIYTL) threads the bilayer. Residues 375-379 (NPLIY) carry the NPxxY motif; important for ligand-induced conformation changes and signaling motif. The Cytoplasmic portion of the chain corresponds to 382 to 479 (FNKTFREAFG…DKAEEQVSYI (98 aa)). A lipid anchor (S-palmitoyl cysteine) is attached at cysteine 396. The short motif at 477-479 (SYI) is the PDZ-binding element.

It belongs to the G-protein coupled receptor 1 family. Interacts (via C-terminus) with MPDZ. In terms of tissue distribution, ubiquitous. Detected in intestine, heart, skeletal muscle, testis, urinary bladder, stomach, liver, lung, brain and kidney. Detected in osteoblasts. Detected in the raphe nucleus in the brain, in dorsal root ganglion neurons, the brain stem, cerebellum and spinal cord. Detected in interstitial cells of Cajal in the small intestine.

It localises to the cell membrane. Its subcellular location is the synapse. The protein localises to the synaptosome. Functionally, G-protein coupled receptor for 5-hydroxytryptamine (serotonin). Also functions as a receptor for various ergot alkaloid derivatives and psychoactive substances. Ligand binding causes a conformation change that triggers signaling via guanine nucleotide-binding proteins (G proteins) and modulates the activity of downstream effectors. HTR2B is coupled to G(q)/G(11) G alpha proteins and activates phospholipase C-beta, releasing diacylglycerol (DAG) and inositol 1,4,5-trisphosphate (IP3) second messengers that modulate the activity of phosphatidylinositol 3-kinase and promote the release of Ca(2+) ions from intracellular stores, respectively. Beta-arrestin family members inhibit signaling via G proteins and mediate activation of alternative signaling pathways. Plays a role in the regulation of dopamine and 5-hydroxytryptamine release, 5-hydroxytryptamine uptake and in the regulation of extracellular dopamine and 5-hydroxytryptamine levels, and thereby affects neural activity. May play a role in the perception of pain. Plays a role in the regulation of behavior, including impulsive behavior. Required for normal proliferation of embryonic cardiac myocytes and normal heart development. Protects cardiomyocytes against apoptosis. Plays a role in the adaptation of pulmonary arteries to chronic hypoxia. Plays a role in vasoconstriction. Required for normal osteoblast function and proliferation, and for maintaining normal bone density. Required for normal proliferation of the interstitial cells of Cajal in the intestine. This chain is 5-hydroxytryptamine receptor 2B (Htr2b), found in Mus musculus (Mouse).